Here is a 385-residue protein sequence, read N- to C-terminus: Elongation factor Ts, mitochondrial (385 aa).

Residues 1–50 (MAWSQSARKPMIGLLFRAQQHGARGYSYSAFQAHLSSSNVDQSATLLRRF) constitute a mitochondrion transit peptide.

This sequence belongs to the EF-Ts family.

It localises to the mitochondrion. Associates with the EF-Tu.GDP complex and induces the exchange of GDP to GTP. It remains bound to the aminoacyl-tRNA.EF-Tu.GTP complex up to the GTP hydrolysis stage on the ribosome. In Oryza sativa subsp. indica (Rice), this protein is Elongation factor Ts, mitochondrial.